The primary structure comprises 396 residues: MGHKHIAIFNIPAHGHINPTLALTASLVKRGYRVTYPVTDEFVKAVEETGAEPLNYRSTLNIDPQQIRELMKNKKDMSQAPLMFIKEMEEVLPQLEALYENDKPDLILFDFMAMAGKLLAEKFGIEAVRLCSTYAQNEHFTFRSISEEFKIELTPEQEDALKNSNLPSFNFEDMFEPAKLNIVFMPRAFQPYGETFDERFSFVGPSLAKRKFQEKETPIISDSGRPVMLISLGTAFNAWPEFYHMCIEAFRDTKWQVIMAVGTTIDPESFDDIPENFSIHQRVPQLEILKKAELFITHGGMNSTMEGLNAGVPLVAVPQMPEQEITARRVEELGLGKHLQPEDTTAASLREAVSQTDGDPHVLKRIQDMQKHIKQAGGAEKAADEIEAFLAPAGVK.

Residues N18, T234, V283, H298, and 302-306 contribute to the UDP site; that span reads NSTME.

Belongs to the UDP-glycosyltransferase family.

It catalyses the reaction an NDP-glycose + an acceptor = a glycosylated acceptor + NDP.. In terms of biological role, glycosyltransferase that can glycosylate a wide range of substrates, including various flavonoids (flavones, flavonols, flavanones, flavanols, chalcones), isoflavonoids and stilbenes, to produce multiple glycosylated products. It can accept diverse nucleotide diphosphate-D/L-sugars as donors, including ADP-, GDP-, CDP-, TDP- or UDP-alpha-D-glucose, and catalyzes O-, N-, or S-glycosylation. In vitro, catalyzes the glycosylation of, among others, apigenin, 3-hydroxyflavone, phloretin or resveratrol, resulting in multiple glucosylated products, along with mono-, di-, tri- and tetraglucosides. Can also catalyze the glycosylation of the macrolide epothilone A with diverse NDP-D/L-sugars, forming different epothilone A glycoside derivatives. This Bacillus licheniformis (strain ATCC 14580 / DSM 13 / JCM 2505 / CCUG 7422 / NBRC 12200 / NCIMB 9375 / NCTC 10341 / NRRL NRS-1264 / Gibson 46) protein is NDP-glycosyltransferase YjiC.